A 122-amino-acid chain; its full sequence is Large ribosomal subunit protein bL17 (122 aa).

Belongs to the bacterial ribosomal protein bL17 family. In terms of assembly, part of the 50S ribosomal subunit. Contacts protein L32.

The polypeptide is Large ribosomal subunit protein bL17 (Staphylococcus carnosus (strain TM300)).